The chain runs to 867 residues: Leucine--tRNA ligase (867 aa).

The 'HIGH' region signature appears at 57–67; that stretch reads PYPSGTLHMGH. A disordered region spans residues 308–327; that stretch reads SQDERTSDDQPKRGVPTGAV. Basic and acidic residues predominate over residues 309–319; sequence QDERTSDDQPK. The short motif at 631 to 635 is the 'KMSKS' region element; the sequence is KMSKS. Residue K634 coordinates ATP.

This sequence belongs to the class-I aminoacyl-tRNA synthetase family.

The protein localises to the cytoplasm. It catalyses the reaction tRNA(Leu) + L-leucine + ATP = L-leucyl-tRNA(Leu) + AMP + diphosphate. This chain is Leucine--tRNA ligase, found in Synechococcus sp. (strain CC9311).